The sequence spans 616 residues: UDP-sugar pyrophosphorylase (616 aa).

The protein belongs to the USP family. It depends on Mg(2+) as a cofactor. Mn(2+) serves as cofactor.

The enzyme catalyses a monosaccharide 1-phosphate + UTP + H(+) = a UDP-monosaccharide + diphosphate. Functionally, may function as the terminal enzyme of the myo-inositol oxidation (MIO) pathway. May also play a role in the salvage pathway for synthesis of nucleotide sugars. The chain is UDP-sugar pyrophosphorylase (USP) from Oryza sativa subsp. japonica (Rice).